The primary structure comprises 214 residues: Probable septum site-determining protein MinC (214 aa).

Belongs to the MinC family. In terms of assembly, interacts with MinD and FtsZ.

Functionally, cell division inhibitor that blocks the formation of polar Z ring septums. Rapidly oscillates between the poles of the cell to destabilize FtsZ filaments that have formed before they mature into polar Z rings. Prevents FtsZ polymerization. The polypeptide is Probable septum site-determining protein MinC (Caldanaerobacter subterraneus subsp. tengcongensis (strain DSM 15242 / JCM 11007 / NBRC 100824 / MB4) (Thermoanaerobacter tengcongensis)).